The following is a 334-amino-acid chain: Holliday junction branch migration complex subunit RuvB (334 aa).

The tract at residues 4–184 is large ATPase domain (RuvB-L); that stretch reads ADRLIQPQLQ…FGIPLRLEFY (181 aa). ATP-binding positions include arginine 24, glycine 65, lysine 68, threonine 69, threonine 70, 131-133, arginine 174, tyrosine 184, and arginine 221; that span reads EDY. Threonine 69 is a binding site for Mg(2+). The small ATPAse domain (RuvB-S) stretch occupies residues 185 to 255; the sequence is NIKDLSTIVT…VADHALDLLD (71 aa). Positions 258-334 are head domain (RuvB-H); it reads NEGFDYMDRK…YQHFQLIKPE (77 aa). DNA-binding residues include arginine 294, arginine 313, and arginine 318.

It belongs to the RuvB family. In terms of assembly, homohexamer. Forms an RuvA(8)-RuvB(12)-Holliday junction (HJ) complex. HJ DNA is sandwiched between 2 RuvA tetramers; dsDNA enters through RuvA and exits via RuvB. An RuvB hexamer assembles on each DNA strand where it exits the tetramer. Each RuvB hexamer is contacted by two RuvA subunits (via domain III) on 2 adjacent RuvB subunits; this complex drives branch migration. In the full resolvosome a probable DNA-RuvA(4)-RuvB(12)-RuvC(2) complex forms which resolves the HJ.

Its subcellular location is the cytoplasm. It catalyses the reaction ATP + H2O = ADP + phosphate + H(+). Functionally, the RuvA-RuvB-RuvC complex processes Holliday junction (HJ) DNA during genetic recombination and DNA repair, while the RuvA-RuvB complex plays an important role in the rescue of blocked DNA replication forks via replication fork reversal (RFR). RuvA specifically binds to HJ cruciform DNA, conferring on it an open structure. The RuvB hexamer acts as an ATP-dependent pump, pulling dsDNA into and through the RuvAB complex. RuvB forms 2 homohexamers on either side of HJ DNA bound by 1 or 2 RuvA tetramers; 4 subunits per hexamer contact DNA at a time. Coordinated motions by a converter formed by DNA-disengaged RuvB subunits stimulates ATP hydrolysis and nucleotide exchange. Immobilization of the converter enables RuvB to convert the ATP-contained energy into a lever motion, pulling 2 nucleotides of DNA out of the RuvA tetramer per ATP hydrolyzed, thus driving DNA branch migration. The RuvB motors rotate together with the DNA substrate, which together with the progressing nucleotide cycle form the mechanistic basis for DNA recombination by continuous HJ branch migration. Branch migration allows RuvC to scan DNA until it finds its consensus sequence, where it cleaves and resolves cruciform DNA. The sequence is that of Holliday junction branch migration complex subunit RuvB from Shewanella putrefaciens (strain CN-32 / ATCC BAA-453).